Here is a 224-residue protein sequence, read N- to C-terminus: Cytidylate kinase (224 aa).

ATP is bound at residue 12–20 (GPSGAGKGT).

The protein belongs to the cytidylate kinase family. Type 1 subfamily.

It localises to the cytoplasm. The enzyme catalyses CMP + ATP = CDP + ADP. It catalyses the reaction dCMP + ATP = dCDP + ADP. This chain is Cytidylate kinase, found in Aliivibrio salmonicida (strain LFI1238) (Vibrio salmonicida (strain LFI1238)).